The chain runs to 206 residues: Ras-related protein Ral-B (206 aa).

Residue 21 to 29 (GSGGVGKSA) coordinates GTP. The Effector region motif lies at 43–51 (YEPTKADSY). GTP-binding positions include 68–72 (DTAGQ), 128–131 (NKSD), and 158–160 (SAK). A disordered region spans residues 181–206 (MSENKDKNGRKSSKSKKSFKERCCLL). At Cys-203 the chain carries Cysteine methyl ester. Cys-203 carries S-geranylgeranyl cysteine lipidation. Residues 204–206 (CLL) constitute a propeptide, removed in mature form.

This sequence belongs to the small GTPase superfamily. Ras family. In terms of assembly, interacts with EXOC2/Sec5 and EXOC8/Exo84. Interacts (via effector domain) with RALBP1. In terms of processing, prenylation is essential for membrane localization. Post-translationally, the farnesylated form confers resistance to the proapoptotic and anti-anchorage-dependent growth effects of some geranylgeranyltransferase I inhibitors.

It is found in the cell membrane. Its subcellular location is the midbody. The enzyme catalyses GTP + H2O = GDP + phosphate + H(+). Its activity is regulated as follows. Alternates between an inactive form bound to GDP and an active form bound to GTP. Activated by a guanine nucleotide-exchange factor (GEF) and inactivated by a GTPase-activating protein (GAP). Multifunctional GTPase involved in a variety of cellular processes including gene expression, cell migration, cell proliferation, oncogenic transformation and membrane trafficking. Accomplishes its multiple functions by interacting with distinct downstream effectors. Acts as a GTP sensor for GTP-dependent exocytosis of dense core vesicles. Required both to stabilize the assembly of the exocyst complex and to localize functional exocyst complexes to the leading edge of migrating cells. Required for suppression of apoptosis. In late stages of cytokinesis, upon completion of the bridge formation between dividing cells, mediates exocyst recruitment to the midbody to drive abscission. Involved in ligand-dependent receptor mediated endocytosis of the EGF and insulin receptors. This is Ras-related protein Ral-B (Ralb) from Mus musculus (Mouse).